We begin with the raw amino-acid sequence, 430 residues long: Adenylosuccinate synthetase (430 aa).

GTP is bound by residues 13 to 19 and 41 to 43; these read GDEGKGK and GHT. Catalysis depends on D14, which acts as the Proton acceptor. Mg(2+) contacts are provided by D14 and G41. IMP-binding positions include 14–17, 39–42, T130, R144, Q225, T240, and R304; these read DEGK and NAGH. Catalysis depends on H42, which acts as the Proton donor. 300–306 is a substrate binding site; it reads STTGRAR. Residues R306, 332 to 334, and 414 to 416 contribute to the GTP site; these read KLD and STG.

Belongs to the adenylosuccinate synthetase family. As to quaternary structure, homodimer. Mg(2+) serves as cofactor.

It is found in the cytoplasm. It catalyses the reaction IMP + L-aspartate + GTP = N(6)-(1,2-dicarboxyethyl)-AMP + GDP + phosphate + 2 H(+). It participates in purine metabolism; AMP biosynthesis via de novo pathway; AMP from IMP: step 1/2. Functionally, plays an important role in the de novo pathway of purine nucleotide biosynthesis. Catalyzes the first committed step in the biosynthesis of AMP from IMP. The chain is Adenylosuccinate synthetase from Azotobacter vinelandii (strain DJ / ATCC BAA-1303).